A 30-amino-acid polypeptide reads, in one-letter code: Photosystem II reaction center protein Psb30 (30 aa).

The Lumenal portion of the chain corresponds to 1–6 (EVIAQL). Residues 7–21 (TMIAMIGIAGPMIIF) form a helical membrane-spanning segment. Residues 22 to 30 (LLAVRRGNL) are Cytoplasmic-facing.

Belongs to the Psb30/Ycf12 family. In terms of assembly, PSII is composed of 1 copy each of membrane proteins PsbA, PsbB, PsbC, PsbD, PsbE, PsbF, PsbH, PsbI, PsbJ, PsbK, PsbL, PsbM, PsbT, PsbX, PsbY, PsbZ, Psb30/Ycf12, peripheral proteins PsbO, CyanoQ (PsbQ), PsbU, PsbV and a large number of cofactors. It forms dimeric complexes. It depends on PSII binds multiple chlorophylls, carotenoids and specific lipids. as a cofactor.

Its subcellular location is the cellular thylakoid membrane. Functionally, a core subunit of photosystem II (PSII), probably helps stabilize the reaction center. PSII is a light-driven water plastoquinone oxidoreductase, using light energy to abstract electrons from H(2)O, generating a proton gradient subsequently used for ATP formation. This Thermostichus vulcanus (Synechococcus vulcanus) protein is Photosystem II reaction center protein Psb30.